Reading from the N-terminus, the 89-residue chain is Large ribosomal subunit protein bL27 (89 aa).

A disordered region spans residues 1–23 (MAHKKAGGSSRNGRDSHSKRLGV).

This sequence belongs to the bacterial ribosomal protein bL27 family.

This chain is Large ribosomal subunit protein bL27, found in Mesorhizobium japonicum (strain LMG 29417 / CECT 9101 / MAFF 303099) (Mesorhizobium loti (strain MAFF 303099)).